Here is a 157-residue protein sequence, read N- to C-terminus: Arginine repressor (157 aa).

This sequence belongs to the ArgR family.

The protein resides in the cytoplasm. It participates in amino-acid biosynthesis; L-arginine biosynthesis [regulation]. In terms of biological role, regulates arginine biosynthesis genes. This chain is Arginine repressor, found in Deinococcus radiodurans (strain ATCC 13939 / DSM 20539 / JCM 16871 / CCUG 27074 / LMG 4051 / NBRC 15346 / NCIMB 9279 / VKM B-1422 / R1).